A 201-amino-acid chain; its full sequence is Ribosomal RNA large subunit methyltransferase E (201 aa).

Residues Gly-40, Trp-42, Asp-62, Asp-78, and Asp-101 each coordinate S-adenosyl-L-methionine. Lys-141 acts as the Proton acceptor in catalysis.

It belongs to the class I-like SAM-binding methyltransferase superfamily. RNA methyltransferase RlmE family.

It is found in the cytoplasm. It catalyses the reaction uridine(2552) in 23S rRNA + S-adenosyl-L-methionine = 2'-O-methyluridine(2552) in 23S rRNA + S-adenosyl-L-homocysteine + H(+). In terms of biological role, specifically methylates the uridine in position 2552 of 23S rRNA at the 2'-O position of the ribose in the fully assembled 50S ribosomal subunit. In Anaplasma marginale (strain Florida), this protein is Ribosomal RNA large subunit methyltransferase E.